Consider the following 447-residue polypeptide: Glutamate-1-semialdehyde 2,1-aminomutase (447 aa).

Lysine 277 bears the N6-(pyridoxal phosphate)lysine mark.

It belongs to the class-III pyridoxal-phosphate-dependent aminotransferase family. HemL subfamily. In terms of assembly, homodimer. Pyridoxal 5'-phosphate serves as cofactor.

The protein localises to the cytoplasm. The catalysed reaction is (S)-4-amino-5-oxopentanoate = 5-aminolevulinate. Its pathway is porphyrin-containing compound metabolism; protoporphyrin-IX biosynthesis; 5-aminolevulinate from L-glutamyl-tRNA(Glu): step 2/2. In Arthrobacter sp. (strain FB24), this protein is Glutamate-1-semialdehyde 2,1-aminomutase.